The chain runs to 245 residues: DNA polymerase sliding clamp (245 aa).

Belongs to the PCNA family. Homotrimer. The subunits circularize to form a toroid; DNA passes through its center. Replication factor C (RFC) is required to load the toroid on the DNA.

In terms of biological role, sliding clamp subunit that acts as a moving platform for DNA processing. Responsible for tethering the catalytic subunit of DNA polymerase and other proteins to DNA during high-speed replication. This is DNA polymerase sliding clamp from Picrophilus torridus (strain ATCC 700027 / DSM 9790 / JCM 10055 / NBRC 100828 / KAW 2/3).